Here is a 168-residue protein sequence, read N- to C-terminus: uncharacterized protein (168 aa).

Residues 23–47 (LFARASIIGVALLLSACATVPMASV) form a helical membrane-spanning segment.

Its subcellular location is the membrane. This is an uncharacterized protein from Haemophilus influenzae (strain ATCC 51907 / DSM 11121 / KW20 / Rd).